Reading from the N-terminus, the 575-residue chain is Hemagglutinin-neuraminidase (575 aa).

Residues 1–10 (MDGDRGKRDS) are compositionally biased toward basic and acidic residues. The tract at residues 1–24 (MDGDRGKRDSYWSTSPSGSTTKLA) is disordered. At 1–37 (MDGDRGKRDSYWSTSPSGSTTKLASGWERSSKVDTWL) the chain is on the intravirion side. Positions 10–14 (SYWST) are incorporation in virion. Residues 11 to 23 (YWSTSPSGSTTKL) show a composition bias toward polar residues. A helical membrane pass occupies residues 38–58 (LILSFTQWALSIATVIICIII). The interval 59–140 (SARQGYSMKE…RQELTQLCES (82 aa)) is involved in interaction with F protein. At 59 to 575 (SARQGYSMKE…SIPKLCKAES (517 aa)) the chain is on the virion surface side. Asparagine 77 is a glycosylation site (N-linked (GlcNAc...) asparagine; by host). 4 disulfide bridges follow: cysteine 192–cysteine 216, cysteine 258–cysteine 271, cysteine 357–cysteine 469, and cysteine 463–cysteine 473. Residues 254 to 259 (NRKSCS) are involved in neuraminidase activity. N-linked (GlcNAc...) asparagine; by host glycosylation is found at asparagine 499 and asparagine 511. A disulfide bond links cysteine 535 and cysteine 544.

This sequence belongs to the paramyxoviruses hemagglutinin-neuraminidase family. Homotetramer; composed of disulfide-linked homodimers. Interacts with F protein trimer. Post-translationally, N-glycosylated; glycans consist of a mixture of high mannose-type oligosaccharides and of complex-type oligosaccharides.

Its subcellular location is the virion membrane. It is found in the host cell membrane. It carries out the reaction Hydrolysis of alpha-(2-&gt;3)-, alpha-(2-&gt;6)-, alpha-(2-&gt;8)- glycosidic linkages of terminal sialic acid residues in oligosaccharides, glycoproteins, glycolipids, colominic acid and synthetic substrates.. Its function is as follows. Attaches the virus to sialic acid-containing cell receptors and thereby initiating infection. Binding of HN protein to the receptor induces a conformational change that allows the F protein to trigger virion/cell membranes fusion. Functionally, neuraminidase activity ensures the efficient spread of the virus by dissociating the mature virions from the neuraminic acid containing glycoproteins. The protein is Hemagglutinin-neuraminidase (HN) of Sendai virus (strain Fushimi) (SeV).